Reading from the N-terminus, the 119-residue chain is MARVKRAMHARKKHKKILKLAKGYYGRRSRTFKNANETVLRAMNFAYVGRKLKKRDFRRLWIARINAAARMNGLSYSKFMNGIKLAGINMNRKMLSEIAINDEKAFADLVEVAKKQLNA.

It belongs to the bacterial ribosomal protein bL20 family.

Binds directly to 23S ribosomal RNA and is necessary for the in vitro assembly process of the 50S ribosomal subunit. It is not involved in the protein synthesizing functions of that subunit. The sequence is that of Large ribosomal subunit protein bL20 from Clostridium novyi (strain NT).